A 572-amino-acid polypeptide reads, in one-letter code: Cell cycle protein kinase DBF2 (572 aa).

Phosphoserine is present on residues S17, S20, and S74. In terms of domain architecture, Protein kinase spans 177-477 (FEMITQVGQG…FEHVKRMSYF (301 aa)). ATP is bound by residues 183–191 (VGQGGYGQV) and K206. D300 serves as the catalytic Proton acceptor. Position 374 is a phosphoserine; by CDC15 (S374). The 78-residue stretch at 478-555 (ADINFSTLRS…RHRNGKQGSS (78 aa)) folds into the AGC-kinase C-terminal domain. T544 is modified (phosphothreonine; by CDC15).

The protein belongs to the protein kinase superfamily. Ser/Thr protein kinase family. As to quaternary structure, interacts with MOB1. MOB1-binding is required for a late mitotic event. Post-translationally, phosphorylation of Ser-374 and Thr-544 by CDC15 is essential for activation of DBF2 kinase activity.

The protein resides in the cytoplasm. The protein localises to the cytoskeleton. It is found in the microtubule organizing center. Its subcellular location is the spindle pole body. It localises to the bud neck. The protein resides in the nucleus. It catalyses the reaction L-seryl-[protein] + ATP = O-phospho-L-seryl-[protein] + ADP + H(+). It carries out the reaction L-threonyl-[protein] + ATP = O-phospho-L-threonyl-[protein] + ADP + H(+). Its activity is regulated as follows. Kinase activity is regulated by BUB2, CDC15 and CDC5, and is maximal during nuclear division. CDK1 kinase inhibits cellular DBF2-MOB1 kinase activity via phosphorylation of both CDC15 and MOB1. Its function is as follows. Ser/Thr-protein kinase involved in the mitotic exit network (MEN) and required after the metaphase to anaphase cell cycle transition. Phosphorylates CHS2 to regulate its dynamics and chitin synthesis at the division site during cytokinesis. Coordinates septin and actomyosin ring (AMR) functions during cytokinesis through the phosphorylation of HOF1. In complex with MOB1, phosphorylates CDC14 at sites adjacent to its nuclear localization sequence, thereby retaining CDC14 in the cytoplasm. Also binds to SWI5 and CLB2 mRNAs cotranscriptionally to regulate their decay. In the nucleus, the DBF2-MOB1 complex regulates passenger protein localization during anaphase. Mediates sorbic acid stress tolerance through promoting vacuolar H(+)-ATPase function, probably through phosphorylation of VMA1 and VMA2 subunits. The polypeptide is Cell cycle protein kinase DBF2 (DBF2) (Saccharomyces cerevisiae (strain ATCC 204508 / S288c) (Baker's yeast)).